The primary structure comprises 351 residues: Fe(3+) ions import ATP-binding protein FbpC (351 aa).

The region spanning 9–239 (LVLKNINKTF…PNSLFLANFM (231 aa)) is the ABC transporter domain. Residue 41 to 48 (GPSGCGKT) coordinates ATP.

This sequence belongs to the ABC transporter superfamily. Fe(3+) ion importer (TC 3.A.1.10) family. As to quaternary structure, the complex is composed of two ATP-binding proteins (FbpC), two transmembrane proteins (FbpB) and a solute-binding protein (FbpA).

The protein localises to the cell inner membrane. The catalysed reaction is Fe(3+)(out) + ATP + H2O = Fe(3+)(in) + ADP + phosphate + H(+). Its function is as follows. Part of the ABC transporter complex FbpABC involved in Fe(3+) ions import. Responsible for energy coupling to the transport system. This Mannheimia succiniciproducens (strain KCTC 0769BP / MBEL55E) protein is Fe(3+) ions import ATP-binding protein FbpC.